The following is a 148-amino-acid chain: UPF0260 protein ECA2365 (148 aa).

This sequence belongs to the UPF0260 family.

In Pectobacterium atrosepticum (strain SCRI 1043 / ATCC BAA-672) (Erwinia carotovora subsp. atroseptica), this protein is UPF0260 protein ECA2365.